A 1077-amino-acid polypeptide reads, in one-letter code: Error-prone DNA polymerase (1077 aa).

Belongs to the DNA polymerase type-C family. DnaE2 subfamily.

It is found in the cytoplasm. It catalyses the reaction DNA(n) + a 2'-deoxyribonucleoside 5'-triphosphate = DNA(n+1) + diphosphate. Functionally, DNA polymerase involved in damage-induced mutagenesis and translesion synthesis (TLS). It is not the major replicative DNA polymerase. In Brucella abortus biovar 1 (strain 9-941), this protein is Error-prone DNA polymerase.